Reading from the N-terminus, the 115-residue chain is Large ribosomal subunit protein bL19 (115 aa).

It belongs to the bacterial ribosomal protein bL19 family.

This protein is located at the 30S-50S ribosomal subunit interface and may play a role in the structure and function of the aminoacyl-tRNA binding site. The polypeptide is Large ribosomal subunit protein bL19 (Salmonella choleraesuis (strain SC-B67)).